Reading from the N-terminus, the 193-residue chain is Ion-translocating oxidoreductase complex subunit A (193 aa).

6 helical membrane-spanning segments follow: residues 4 to 24 (FLLV…KFLG), 39 to 59 (IGMG…CWLV), 71 to 91 (FLRI…IETV), 102 to 122 (ALGI…LPLM), 134 to 154 (TLSG…FAGM), and 171 to 191 (PIAF…AGLV).

This sequence belongs to the NqrDE/RnfAE family. As to quaternary structure, the complex is composed of six subunits: RnfA, RnfB, RnfC, RnfD, RnfE and RnfG.

The protein resides in the cellular chromatophore membrane. Functionally, part of a membrane-bound complex that couples electron transfer with translocation of ions across the membrane. Required for nitrogen fixation. Involved in electron transfer to nitrogenase. This is Ion-translocating oxidoreductase complex subunit A from Rhodobacter capsulatus (Rhodopseudomonas capsulata).